The following is a 1337-amino-acid chain: uncharacterized protein (1337 aa).

Disordered regions lie at residues 1 to 94 and 119 to 174; these read MPTS…QSSA and ARDI…PSFF. Composition is skewed to low complexity over residues 18-37 and 68-79; these read SNTSSTESSSSNNSSTASGS and SSTHFQSSHSVS. The span at 80–94 shows a compositional bias: polar residues; sequence NAHNQSPLNQSQSSA. Residues 123-147 are compositionally biased toward low complexity; that stretch reads PQQPSHSQNPSSSSSSSSSQSSQHS. The segment covering 157-167 has biased composition (basic and acidic residues); it reads NEKKSLDDPSP. 6 consecutive transmembrane segments (helical) span residues 209–229, 241–261, 267–287, 328–348, 361–381, and 387–407; these read GLKPVIRAAINSWIAFLLVLA, FFVVITSILVPAMEPIAPMLW, FLLLFSAYAWTVLAAKLATVA, VRPLPSIIWALFEFSAVALFI, CVFSIICTAVSANMGPMYPYF, and LFFIVPNCVQTGITIGCTLFI. Disordered stretches follow at residues 623–662 and 868–894; these read SHVRTGSNNSEAPLAAKTSTTKRNGDLLEPQSPSLRSHKS and YDENIHNDVDKDMNQSSTQPRDPDADH. A compositionally biased stretch (polar residues) spans 626-644; that stretch reads RTGSNNSEAPLAAKTSTTK. Over residues 868–880 the composition is skewed to basic and acidic residues; the sequence is YDENIHNDVDKDM. The next 6 helical transmembrane spans lie at 917-937, 975-995, 997-1017, 1021-1041, 1066-1086, and 1275-1295; these read MNVFVLKVGTLAVICTIPAFC, IFGTFFGAILGMVIWYTGSGH, LGNAYGLAAVWGAAIPFIQFI, FVILTPMPAVIFCVTAALTVT, FLTVAAGITVAFIFSFLPQPR, and FAVGCTIAYAVVNHIDRIMFI.

The protein resides in the membrane. This is an uncharacterized protein from Schizosaccharomyces pombe (strain 972 / ATCC 24843) (Fission yeast).